Reading from the N-terminus, the 1212-residue chain is Nucleolar protein 6 (1212 aa).

2 disordered regions span residues Met1–Ile72 and Lys1156–Ser1212. A compositionally biased stretch (basic residues) spans Leu1197–Ser1212.

Belongs to the NRAP family. In terms of assembly, part of the small subunit (SSU) processome, composed of more than 70 proteins and the RNA chaperone small nucleolar RNA (snoRNA) U3.

Its subcellular location is the nucleus. It localises to the nucleolus. The protein localises to the chromosome. Functionally, part of the small subunit (SSU) processome, first precursor of the small eukaryotic ribosomal subunit. During the assembly of the SSU processome in the nucleolus, many ribosome biogenesis factors, an RNA chaperone and ribosomal proteins associate with the nascent pre-rRNA and work in concert to generate RNA folding, modifications, rearrangements and cleavage as well as targeted degradation of pre-ribosomal RNA by the RNA exosome. The polypeptide is Nucleolar protein 6 (Drosophila persimilis (Fruit fly)).